A 1028-amino-acid chain; its full sequence is MCSVLRFQRNMASWVKRHVFTFDLGDIQEKRGSDSGSGQSRSTADRYFNAVFGLGLLLFCIVCMAYLSPFLGSDLPQCRSVTMYPSYALVQGFDRRFSRLGRKYHLYLYREAGKDNGFSDDNEIHLDGIPVLFIPGNAGTYKQVRSIAAATANLYYGEMRDALNNNNTKNLDFFTADFNEDFTAFHGRTMLDQAEYCNDAIRYILSIYELSDKYRASGEPLPTSVLVVGHSMGGIVARVMTTLKNHIPQSINTILTLSSPHSTAPATFDGDILKIYNAMNAFWESKFRDRDKDPFYAENVSVISITGGVLDSVLPADYTSLEGIIPSDNGFTTYTTTIPWVWTPIDHLAIVWCDQLRIVVAKLLLELVDRTSASKTRPLPDRMRLARRSLLSGLESSASADFHLWDNEDYIFQPKVAPGALTTAQEMSPILLNVETYDTLNEYNYLAIPHNEPNLRFSLLTSLENLEELHILFCQNYNEHNSNGPIEYSSRCVSPSQDFIHVPRSFENSKYPSESSVGSASLPFKALHFNQTLLSKYDFIKFRKPSKSSFKDEDFVLVELSTTDWQTTVNCNPFQLLLSSAKFAHNASSAPFIQTFRFPYLSSSLVSYKLDVSYTGENLVFEPFIAQSIDSPFETKWHLRLRDSVTITIHSEAPFIPFESHYDKSVKLRLIAPPDCNINLSLSINWYMTLKFLFIRYRLAVAALPLSLVSFVLANQFALYYSSSFFPDFSTTLRAVTSKFWLKLTLSSILLTPILNISFIQRLIHSLDPSGVNSPFLIRKKNIMTAAYYLGIREIFMCWIGPLLSCITLSLVYMLAFGISTLESCVRRVSCYMSTAISKTRMKEIWLKDECEYEEGLVLRRRIGSGIMILAVVLYVPYQLVFVLLFLVQLNTVIKLNINYFNTKRHSNLRNYNSSYLLLMLCVLPINAPMVFVFLHNFGRRWVTSFRSHHNCLAILPIILLVCDNAGLRIPRSHCIERISKLITIGSFLYLSLYSVIYGIRNLFWAHHLVNLISGWLLFTSLDLTSNN.

A helical transmembrane segment spans residues 51–71 (VFGLGLLLFCIVCMAYLSPFL). The N-linked (GlcNAc...) asparagine glycan is linked to Asn166. Ser231 is an active-site residue. Residues Asn299, Asn530, Asn586, and Asn679 are each glycosylated (N-linked (GlcNAc...) asparagine). A run of 8 helical transmembrane segments spans residues 699 to 719 (LAVAALPLSLVSFVLANQFAL), 740 to 760 (FWLKLTLSSILLTPILNISFI), 799 to 819 (WIGPLLSCITLSLVYMLAFGI), 867 to 887 (IMILAVVLYVPYQLVFVLLFL), 915 to 935 (SYLLLMLCVLPINAPMVFVFL), 948 to 968 (SHHNCLAILPIILLVCDNAGL), 979 to 999 (ISKLITIGSFLYLSLYSVIYG), and 1002 to 1022 (NLFWAHHLVNLISGWLLFTSL).

The protein belongs to the GPI inositol-deacylase family.

The protein localises to the endoplasmic reticulum membrane. In terms of biological role, involved in inositol deacylation of GPI-anchored proteins which plays important roles in the quality control and ER-associated degradation of GPI-anchored proteins. This chain is GPI inositol-deacylase (BST1), found in Eremothecium gossypii (strain ATCC 10895 / CBS 109.51 / FGSC 9923 / NRRL Y-1056) (Yeast).